The sequence spans 339 residues: MRILEEDLKNSTYRIRIESLDDLWYLRNILSEGDEVSAITFRRVEESADVQRSRERERIPITIRLKVEKIEFQDFDNRLRILGTVIEGPEDTKGKHQSITVTVDSEISITKEWDDQHIDLLKEATDEKYVTVYTAVAMDEDEAQIFLIHPYGIQQVGTVYSGRSGKYAEGNYSEASYFDQIVNALKNYSNSIIILGPGFARDRFARYCAQRGVNVIGSFPANRTDSGAVYEFITSADGAKLLSNERIARDKEIVDEFLVAVKKDMGVYGRDQTESALQMGALSDLIITDEMFRTEDGRRSLSIAQTVGTRIHIVSVSNDPGQIVKKFGGFAGILRYRVQ.

The protein belongs to the eukaryotic release factor 1 family. Pelota subfamily. Monomer. A divalent metal cation serves as cofactor.

Its subcellular location is the cytoplasm. In terms of biological role, may function in recognizing stalled ribosomes, interact with stem-loop structures in stalled mRNA molecules, and effect endonucleolytic cleavage of the mRNA. May play a role in the release non-functional ribosomes and degradation of damaged mRNAs. Has endoribonuclease activity. This Thermoplasma acidophilum (strain ATCC 25905 / DSM 1728 / JCM 9062 / NBRC 15155 / AMRC-C165) protein is Protein pelota homolog (pelA).